The chain runs to 120 residues: Ribonuclease P protein component (120 aa).

It belongs to the RnpA family. As to quaternary structure, consists of a catalytic RNA component (M1 or rnpB) and a protein subunit.

The catalysed reaction is Endonucleolytic cleavage of RNA, removing 5'-extranucleotides from tRNA precursor.. Functionally, RNaseP catalyzes the removal of the 5'-leader sequence from pre-tRNA to produce the mature 5'-terminus. It can also cleave other RNA substrates such as 4.5S RNA. The protein component plays an auxiliary but essential role in vivo by binding to the 5'-leader sequence and broadening the substrate specificity of the ribozyme. The sequence is that of Ribonuclease P protein component from Thioalkalivibrio sulfidiphilus (strain HL-EbGR7).